The sequence spans 554 residues: Phenylalanine--tRNA ligase beta subunit (554 aa).

The 78-residue stretch at 274 to 351 (LTPDSAEITI…INYGYENFNG (78 aa)) folds into the B5 domain. 3 residues coordinate Mg(2+): D329, D335, and D339.

The protein belongs to the phenylalanyl-tRNA synthetase beta subunit family. Type 2 subfamily. In terms of assembly, tetramer of two alpha and two beta subunits. It depends on Mg(2+) as a cofactor.

It localises to the cytoplasm. The catalysed reaction is tRNA(Phe) + L-phenylalanine + ATP = L-phenylalanyl-tRNA(Phe) + AMP + diphosphate + H(+). This chain is Phenylalanine--tRNA ligase beta subunit, found in Methanococcus aeolicus (strain ATCC BAA-1280 / DSM 17508 / OCM 812 / Nankai-3).